A 123-amino-acid polypeptide reads, in one-letter code: Small ribosomal subunit protein uS12 (123 aa).

Residue Asp-89 is modified to 3-methylthioaspartic acid. The segment at 104–123 (TQGVKDRRQRRSKYGAKRPK) is disordered. Positions 110-123 (RRQRRSKYGAKRPK) are enriched in basic residues.

Belongs to the universal ribosomal protein uS12 family. In terms of assembly, part of the 30S ribosomal subunit. Contacts proteins S8 and S17. May interact with IF1 in the 30S initiation complex.

Functionally, with S4 and S5 plays an important role in translational accuracy. Interacts with and stabilizes bases of the 16S rRNA that are involved in tRNA selection in the A site and with the mRNA backbone. Located at the interface of the 30S and 50S subunits, it traverses the body of the 30S subunit contacting proteins on the other side and probably holding the rRNA structure together. The combined cluster of proteins S8, S12 and S17 appears to hold together the shoulder and platform of the 30S subunit. The polypeptide is Small ribosomal subunit protein uS12 (Rhodospirillum rubrum (strain ATCC 11170 / ATH 1.1.1 / DSM 467 / LMG 4362 / NCIMB 8255 / S1)).